The primary structure comprises 249 residues: 2,3-bisphosphoglycerate-dependent phosphoglycerate mutase (249 aa).

Residues 8–15, 21–22, Arg60, 87–90, Lys98, 114–115, and 183–184 contribute to the substrate site; these read RHGESVWN, TG, ERHY, RR, and GN. The active-site Tele-phosphohistidine intermediate is His9. Residue Glu87 is the Proton donor/acceptor of the active site.

The protein belongs to the phosphoglycerate mutase family. BPG-dependent PGAM subfamily.

It carries out the reaction (2R)-2-phosphoglycerate = (2R)-3-phosphoglycerate. It functions in the pathway carbohydrate degradation; glycolysis; pyruvate from D-glyceraldehyde 3-phosphate: step 3/5. Catalyzes the interconversion of 2-phosphoglycerate and 3-phosphoglycerate. The polypeptide is 2,3-bisphosphoglycerate-dependent phosphoglycerate mutase (Endomicrobium trichonymphae).